A 140-amino-acid chain; its full sequence is Regulator of ribonuclease activity B (140 aa).

Residues 115-140 (FEDPNAQDDDEDDGEAIDEDDNGIRH) are disordered. Residues 119–140 (NAQDDDEDDGEAIDEDDNGIRH) are compositionally biased toward acidic residues.

Belongs to the RraB family. In terms of assembly, interacts with the C-terminal region of Rne.

The protein resides in the cytoplasm. Its function is as follows. Globally modulates RNA abundance by binding to RNase E (Rne) and regulating its endonucleolytic activity. Can modulate Rne action in a substrate-dependent manner by altering the composition of the degradosome. In Pantoea ananatis (strain LMG 20103), this protein is Regulator of ribonuclease activity B.